Consider the following 247-residue polypeptide: Terpene cyclase adrI (247 aa).

5 helical membrane passes run 20–40 (VAEFLRILAGICWTLNYFSML), 51–71 (TGIFPLCNDIGWEFIYAFIYP), 76–96 (HWEGGVRVWFLVHCIVIFFII), 112–132 (NLYFLYGIVTIGFAIGQYSFA), and 141–161 (FFYGGVLCQTLASLGPIAQIL). Asparagine 164 carries an N-linked (GlcNAc...) asparagine glycan. The next 2 membrane-spanning stretches (helical) occupy residues 179–199 (FGGFIKLTIYYLTGNAAGPWF) and 205–225 (KFYIGLTLILDFTYPICYYVI).

It belongs to the paxB family.

The protein resides in the membrane. It participates in secondary metabolite biosynthesis; terpenoid biosynthesis. In terms of biological role, terpene cyclase; part of the gene cluster that mediates the biosynthesis of andrastins, meroterpenoid compounds that exhibit inhibitory activity against ras farnesyltransferase, suggesting that they could be promising leads for antitumor agents. The first step of the pathway is the synthesis of 3,5-dimethylorsellinic acid (DMOA) by the polyketide synthase adrD via condensation of one acetyl-CoA starter unit with 3 malonyl-CoA units and 2 methylations. DMAO is then converted to farnesyl-DMAO by the prenyltransferase adrG. The methyltransferase adrK catalyzes the methylation of the carboxyl group of farnesyl-DMAO to farnesyl-DMAO methyl ester which is further converted to epoxyfarnesyl-DMAO methyl ester by the FAD-dependent monooxygenase adrH. The terpene cyclase adrI then catalyzes the carbon skeletal rearrangement to generate the andrastin E, the first compound in the pathway having the andrastin scaffold, with the tetracyclic ring system. The post-cyclization tailoring enzymes adrF, adrE, adrJ, and adrA, are involved in the conversion of andrastin E into andrastin A. The short chain dehydrogenase adrF is responsible for the oxidation of the C-3 a hydroxyl group of andrastin E to yield the corresponding ketone, andrastin D. The ketoreductase adrE stereoselectively reduces the carbonyl moiety to reverse the stereochemistry of the C-3 position to yield andrastin F. The acetyltransferase adrJ is the acetyltransferase that attaches the acetyl group to the C-3 hydroxyl group of andrastin F to yield andrastin C. Finally, the cytochrome P450 monooxygenase adrA catalyzes two sequential oxidation reactions of the C-23 methyl group, to generate the corresponding alcohol andrastin B, and aldehyde andrastin A. The chain is Terpene cyclase adrI from Penicillium rubens (strain ATCC 28089 / DSM 1075 / NRRL 1951 / Wisconsin 54-1255) (Penicillium chrysogenum).